A 455-amino-acid polypeptide reads, in one-letter code: Beta-1,4-mannosyltransferase bre-3 (455 aa).

The protein belongs to the glycosyltransferase 2 family. In terms of tissue distribution, endothelial cells.

It is found in the cytoplasm. It participates in protein modification; protein glycosylation. Functionally, glycosyltransferase with a proposed role in glycosphingolipid biosynthesis. Involved in susceptibility to pore-forming crystal toxins in conjunction with bre-1, bre-2, bre-4 and bre-5. Involved in resistance to the nematotoxic C.cinerea galectin Cgl2. Has a role in determining brood size. This chain is Beta-1,4-mannosyltransferase bre-3 (bre-3), found in Caenorhabditis elegans.